A 349-amino-acid polypeptide reads, in one-letter code: MALVPTPAVNEGPLFAEVDMGDNSSTPTVRATVVQASTIFYDTPATLVKAERLLAEAASYGAQLVVFPEAFIGGYPRGSTFGVSIGNRTAKGKEEFRKYHASAIDVPGPEVDRLAAMAGKYKVYLVMGVIERDGYTLYCTVLFFDSQGHFLGKHRKIMPTALERIIWGFGDGSTIPVYDTPLGKIGAAICWENRMPLLRTAMYAKGIEIYCAPTADSRDVWQASMTHIALEGGCFVLSANQFCRRKDYPPPPEYVFSGTEEDLTPDSIVCAGGSVIISPSGAVLAGPNYVGEALISADLDLGEIARAKFDFDVVGHYARPEVLSLIVRDHAVSPVSFTSTSSKAESSPK.

The 273-residue stretch at 29–301 (VRATVVQAST…EALISADLDL (273 aa)) folds into the CN hydrolase domain. Residue E69 is the Proton acceptor of the active site. Residue K156 is the Proton donor of the active site. C190 serves as the catalytic Nucleophile.

The protein belongs to the carbon-nitrogen hydrolase superfamily. Nitrilase family. Expressed in roots, stems, cotyledons, leaves and flowers.

It is found in the cell membrane. It catalyses the reaction a nitrile + 2 H2O = a carboxylate + NH4(+). The catalysed reaction is 3-cyano-L-alanine + 2 H2O = L-aspartate + NH4(+). It carries out the reaction L-asparagine = 3-cyano-L-alanine + H2O. Functionally, highly specific for beta-cyano-L-alanine (Ala(CN)). Low activity with 3-phenylpropionitrile (PPN). Not associated with auxin production but may be involved in cyanide detoxification. In Nicotiana tabacum (Common tobacco), this protein is Bifunctional nitrilase/nitrile hydratase NIT4A (NIT4A).